We begin with the raw amino-acid sequence, 292 residues long: MEQLKAFDNEVNAFLDNMFGPRDSRVRGWFLLDSYLPTFILTITYLLSIWLGNKYMKNRPALSLRGILTLYNLAITLLSAYMLVELILSSWEGGYNLQCQNLDSAGEGDVRVAKVLWWYYFSKLVEFLDTIFFVLRKKTNQITFLHVYHHASMFNIWWCVLNWIPCGQSFFGPTLNSFIHILMYSYYGLSVFPSMHKYLWWKKYLTQAQLVQFVLTITHTLSAVVKPCGFPFGCLIFQSSYMMTLVILFLNFYIQTYRKKPVKKELQEKEVKNGFPKAHLIVANGMTDKKAQ.

The next 7 helical transmembrane spans lie at 29-49, 67-87, 115-135, 153-173, 175-195, 205-225, and 230-250; these read WFLL…LLSI, ILTL…VELI, VLWW…FFVL, MFNI…FFGP, LNSF…FPSM, LTQA…SAVV, and FPFG…ILFL. A Di-lysine motif motif is present at residues 289–292; the sequence is KKAQ.

The protein belongs to the ELO family. ELOVL2 subfamily. As to quaternary structure, interacts with TECR. Highly expressed in testis, lower level in liver. Weakly expressed in white adipose tissue, brain and kidney.

The protein localises to the endoplasmic reticulum membrane. The catalysed reaction is a very-long-chain acyl-CoA + malonyl-CoA + H(+) = a very-long-chain 3-oxoacyl-CoA + CO2 + CoA. The enzyme catalyses (5Z,8Z,11Z,14Z)-eicosatetraenoyl-CoA + malonyl-CoA + H(+) = (7Z,10Z,13Z,16Z)-3-oxodocosatetraenoyl-CoA + CO2 + CoA. It carries out the reaction (7Z,10Z,13Z,16Z)-docosatetraenoyl-CoA + malonyl-CoA + H(+) = (9Z,12Z,15Z,18Z)-3-oxotetracosatetraenoyl-CoA + CO2 + CoA. It catalyses the reaction (5Z,8Z,11Z,14Z,17Z)-eicosapentaenoyl-CoA + malonyl-CoA + H(+) = 3-oxo-(7Z,10Z,13Z,16Z,19Z)-docosapentaenoyl-CoA + CO2 + CoA. The catalysed reaction is (7Z,10Z,13Z,16Z,19Z)-docosapentaenoyl-CoA + malonyl-CoA + H(+) = (9Z,12Z,15Z,18Z,21Z)-3-oxotetracosapentaenoyl-CoA + CO2 + CoA. It functions in the pathway lipid metabolism; polyunsaturated fatty acid biosynthesis. Functionally, catalyzes the first and rate-limiting reaction of the four reactions that constitute the long-chain fatty acids elongation cycle. This endoplasmic reticulum-bound enzymatic process allows the addition of 2 carbons to the chain of long- and very long-chain fatty acids (VLCFAs) per cycle. Condensing enzyme that catalyzes the synthesis of polyunsaturated very long chain fatty acid (C20- and C22-PUFA), acting specifically toward polyunsaturated acyl-CoA with the higher activity toward C20:4(n-6) acyl-CoA. May participate in the production of polyunsaturated VLCFAs of different chain lengths that are involved in multiple biological processes as precursors of membrane lipids and lipid mediators. Essential for the formation of C24:5(n-6) up to C30:5(n-6) PUFAs in testis, these fatty acids being indispensable for normal spermatogenesis and fertility. The chain is Very long chain fatty acid elongase 2 from Mus musculus (Mouse).